Reading from the N-terminus, the 335-residue chain is Glyceraldehyde-3-phosphate dehydrogenase (335 aa).

Residues 15–16 (RI) and D37 each bind NAD(+). Residues 155–157 (SCT), T186, R201, 214–215 (TG), and R237 contribute to the D-glyceraldehyde 3-phosphate site. C156 (nucleophile) is an active-site residue. NAD(+)-binding residues include Q301 and N318.

The protein belongs to the glyceraldehyde-3-phosphate dehydrogenase family. In terms of assembly, homotetramer.

The protein resides in the cytoplasm. The catalysed reaction is D-glyceraldehyde 3-phosphate + phosphate + NADP(+) = (2R)-3-phospho-glyceroyl phosphate + NADPH + H(+). It catalyses the reaction D-glyceraldehyde 3-phosphate + phosphate + NAD(+) = (2R)-3-phospho-glyceroyl phosphate + NADH + H(+). The protein operates within carbohydrate degradation; glycolysis; pyruvate from D-glyceraldehyde 3-phosphate: step 1/5. This is Glyceraldehyde-3-phosphate dehydrogenase (gap) from Haloarcula vallismortis (Halobacterium vallismortis).